A 140-amino-acid polypeptide reads, in one-letter code: MLPGIGFSELLLIGLAALIIIGPKDLPMMMRTLGQLMGKGRRMAREFQAAFDDIARQSELDELKKEIQDLRQSNTFKSAQDDLAAYEADVNSAVMREHPVSPPPPATPPAPPAELPPEAAPHADSQNAPPEADPAKGDRT.

A helical membrane pass occupies residues 2–22 (LPGIGFSELLLIGLAALIIIG). A disordered region spans residues 90-140 (VNSAVMREHPVSPPPPATPPAPPAELPPEAAPHADSQNAPPEADPAKGDRT). Pro residues predominate over residues 100–119 (VSPPPPATPPAPPAELPPEA).

This sequence belongs to the TatB family. In terms of assembly, the Tat system comprises two distinct complexes: a TatABC complex, containing multiple copies of TatA, TatB and TatC subunits, and a separate TatA complex, containing only TatA subunits. Substrates initially bind to the TatABC complex, which probably triggers association of the separate TatA complex to form the active translocon.

The protein localises to the cell inner membrane. Functionally, part of the twin-arginine translocation (Tat) system that transports large folded proteins containing a characteristic twin-arginine motif in their signal peptide across membranes. Together with TatC, TatB is part of a receptor directly interacting with Tat signal peptides. TatB may form an oligomeric binding site that transiently accommodates folded Tat precursor proteins before their translocation. The protein is Sec-independent protein translocase protein TatB of Hyphomonas neptunium (strain ATCC 15444).